The following is an 82-amino-acid chain: Small ribosomal subunit protein uS17 (82 aa).

Belongs to the universal ribosomal protein uS17 family. Part of the 30S ribosomal subunit.

One of the primary rRNA binding proteins, it binds specifically to the 5'-end of 16S ribosomal RNA. This Shewanella woodyi (strain ATCC 51908 / MS32) protein is Small ribosomal subunit protein uS17.